A 266-amino-acid polypeptide reads, in one-letter code: UPF0246 protein PHZ_c0561 (266 aa).

Residues 245–266 form a disordered region; it reads DEEFTFARPQPPPPAASRNKED.

This sequence belongs to the UPF0246 family.

The protein is UPF0246 protein PHZ_c0561 of Phenylobacterium zucineum (strain HLK1).